The sequence spans 21 residues: Peptide PGLa-R5 (21 aa).

The residue at position 21 (L21) is a Leucine amide.

Expressed by the skin glands.

Its subcellular location is the secreted. Its function is as follows. Antimicrobial peptide. This chain is Peptide PGLa-R5, found in Xenopus ruwenzoriensis (Uganda clawed frog).